A 127-amino-acid chain; its full sequence is Large ribosomal subunit protein bL17 (127 aa).

It belongs to the bacterial ribosomal protein bL17 family. Part of the 50S ribosomal subunit. Contacts protein L32.

The chain is Large ribosomal subunit protein bL17 from Photobacterium profundum (strain SS9).